A 72-amino-acid chain; its full sequence is Translation initiation factor IF-1 2 (72 aa).

Positions 1–72 (MAKEDAIEVD…KRGRITYRMK (72 aa)) constitute an S1-like domain.

This sequence belongs to the IF-1 family. As to quaternary structure, component of the 30S ribosomal translation pre-initiation complex which assembles on the 30S ribosome in the order IF-2 and IF-3, IF-1 and N-formylmethionyl-tRNA(fMet); mRNA recruitment can occur at any time during PIC assembly.

It is found in the cytoplasm. In terms of biological role, one of the essential components for the initiation of protein synthesis. Stabilizes the binding of IF-2 and IF-3 on the 30S subunit to which N-formylmethionyl-tRNA(fMet) subsequently binds. Helps modulate mRNA selection, yielding the 30S pre-initiation complex (PIC). Upon addition of the 50S ribosomal subunit IF-1, IF-2 and IF-3 are released leaving the mature 70S translation initiation complex. The protein is Translation initiation factor IF-1 2 of Nitratidesulfovibrio vulgaris (strain DP4) (Desulfovibrio vulgaris).